Here is a 374-residue protein sequence, read N- to C-terminus: MVLISEDSRELLQAHVELWNQTYSFMKSVALAVALDLHIADAIHRRGGAATLSQILGEIGVRPCKLPGLHRIMRVLTVSGTFTIVQPSAETMSSESDGREPVYKLTTASSLLVSSESSATASLSPMLNHVLSPFRDSPLSMGLTAWFRHDEDEQAPGMCPFTLMYGTTLWEVCRRDDAINALFNNAMAADSNFLMQILLKEFSEVFLGIDSLVDVAGGVGGATMAIAAAFPCLKCTVLDLPHVVAKAPSSSIGNVQFVGGDMFESIPPANVVLLKWILHDWSNDECIKILKNCKQAIPSRDAGGKIIIIDVVVGSDSSDTKLLETQVIYDLHLMKIGGVERDEQEWKKIFLEAGFKDYKIMPILGLRSIIELYP.

4 residues coordinate S-adenosyl-L-methionine: Asp-239, Asp-261, Met-262, and Lys-275. The active-site Proton acceptor is the His-279.

This sequence belongs to the class I-like SAM-binding methyltransferase superfamily. Cation-independent O-methyltransferase family. COMT subfamily. Homodimer. As to expression, expressed predominantly in root hairs.

The enzyme catalyses (8Z,11Z)-5-(pentadeca-8,11,14-trien-1-yl)resorcinol + S-adenosyl-L-methionine = (8Z,11Z)-5-(pentadeca- 8,11,14-trien-1-yl)resorcinol-3-methyl ether + S-adenosyl-L-homocysteine + H(+). In terms of biological role, O-methyltransferase involved in the biosynthetic pathway of the phytotoxin sorgoleone, a potent broad-spectrum inhibitor active against many agronomically important monocot and dicot weed species. Substrate specificity for alkylresorcinols. Strong preference for a five carbons alkyl side chain. The chain is 5-pentadecatrienyl resorcinol O-methyltransferase (OMT3) from Sorghum bicolor (Sorghum).